Consider the following 268-residue polypeptide: Thiazole synthase (268 aa).

The active-site Schiff-base intermediate with DXP is the Lys111. 1-deoxy-D-xylulose 5-phosphate is bound by residues Gly172, 198–199 (AG), and 220–221 (NT).

It belongs to the ThiG family. Homotetramer. Forms heterodimers with either ThiH or ThiS.

Its subcellular location is the cytoplasm. The catalysed reaction is [ThiS sulfur-carrier protein]-C-terminal-Gly-aminoethanethioate + 2-iminoacetate + 1-deoxy-D-xylulose 5-phosphate = [ThiS sulfur-carrier protein]-C-terminal Gly-Gly + 2-[(2R,5Z)-2-carboxy-4-methylthiazol-5(2H)-ylidene]ethyl phosphate + 2 H2O + H(+). The protein operates within cofactor biosynthesis; thiamine diphosphate biosynthesis. Functionally, catalyzes the rearrangement of 1-deoxy-D-xylulose 5-phosphate (DXP) to produce the thiazole phosphate moiety of thiamine. Sulfur is provided by the thiocarboxylate moiety of the carrier protein ThiS. In vitro, sulfur can be provided by H(2)S. The chain is Thiazole synthase from Caulobacter sp. (strain K31).